The sequence spans 143 residues: Sperm mitochondrial-associated cysteine-rich protein (143 aa).

Phosphoserine is present on residues serine 37, serine 44, and serine 110. The disordered stretch occupies residues 101 to 143 (CCSSENKTESDSDTSGQTLEKGSQSPQSPPGAQGNWNQKKSNK). Over residues 113–126 (DTSGQTLEKGSQSP) the composition is skewed to polar residues. Residue serine 128 is modified to Phosphoserine. Residues 134 to 143 (GNWNQKKSNK) show a composition bias toward polar residues.

In terms of tissue distribution, testis. Is selectively expressed in the spermatids of seminiferous tubules.

It is found in the cytoplasm. Its subcellular location is the mitochondrion membrane. Its function is as follows. Involved in sperm motility. Its absence is associated with genetic background dependent male infertility. Infertility may be due to reduced sperm motility in the female reproductive tract and inability to penetrate the oocyte zona pellucida. The sequence is that of Sperm mitochondrial-associated cysteine-rich protein (Smcp) from Mus musculus (Mouse).